A 335-amino-acid chain; its full sequence is NADH-quinone oxidoreductase subunit H (335 aa).

A run of 8 helical transmembrane segments spans residues 11–31, 81–101, 114–134, 154–174, 187–207, 238–258, 270–290, and 307–327; these read VILT…AGAL, VIFT…FAII, IGLL…LFAG, VSYE…VGSF, LWFI…GVAV, FFVG…TLFF, QLSF…FILL, and WKFC…VVLW.

The protein belongs to the complex I subunit 1 family. As to quaternary structure, NDH-1 is composed of 13 different subunits. Subunits NuoA, H, J, K, L, M, N constitute the membrane sector of the complex.

It localises to the cell inner membrane. It carries out the reaction a quinone + NADH + 5 H(+)(in) = a quinol + NAD(+) + 4 H(+)(out). In terms of biological role, NDH-1 shuttles electrons from NADH, via FMN and iron-sulfur (Fe-S) centers, to quinones in the respiratory chain. The immediate electron acceptor for the enzyme in this species is believed to be ubiquinone. Couples the redox reaction to proton translocation (for every two electrons transferred, four hydrogen ions are translocated across the cytoplasmic membrane), and thus conserves the redox energy in a proton gradient. This subunit may bind ubiquinone. This chain is NADH-quinone oxidoreductase subunit H, found in Pseudomonas fluorescens (strain ATCC BAA-477 / NRRL B-23932 / Pf-5).